The chain runs to 246 residues: Exosome complex component Rrp41 (246 aa).

The protein belongs to the RNase PH family. Rrp41 subfamily. As to quaternary structure, component of the archaeal exosome complex. Forms a hexameric ring-like arrangement composed of 3 Rrp41-Rrp42 heterodimers. The hexameric ring associates with a trimer of Rrp4 and/or Csl4 subunits.

Its subcellular location is the cytoplasm. Its function is as follows. Catalytic component of the exosome, which is a complex involved in RNA degradation. Has 3'-&gt;5' exoribonuclease activity. Can also synthesize heteromeric RNA-tails. The polypeptide is Exosome complex component Rrp41 (Pyrobaculum islandicum (strain DSM 4184 / JCM 9189 / GEO3)).